The following is a 2053-amino-acid chain: Nonribosomal peptide synthetase pboA (2053 aa).

The tract at residues 16–402 (ACRDNADRPA…GRRDRVAKVR (387 aa)) is adenylation 1. The Carrier 1 domain maps to 503–579 (RSYASVDEVI…HLITVCRERR (77 aa)). Serine 540 is subject to O-(pantetheine 4'-phosphoryl)serine. Residues 611–896 (NDPSLYCVKH…LLQSVHRTVQ (286 aa)) form a condensation 1 region. An adenylation 2 region spans residues 1034–1418 (SAAARNPTNI…GRRDRQVKLR (385 aa)). The region spanning 1515–1593 (VPDTSVKKII…DIVALVEGKI (79 aa)) is the Carrier 2 domain. An O-(pantetheine 4'-phosphoryl)serine modification is found at serine 1553. Residues 1630 to 1981 (NSQCQSGFNV…LQLRLEYDSD (352 aa)) form a condensation 2 region.

This sequence belongs to the NRP synthetase family. Pantetheine 4'-phosphate serves as cofactor.

The protein operates within secondary metabolite biosynthesis. Functionally, nonribosomal peptide synthetase; part of the gene cluster that mediates the biosynthesis of protubonine B, a hydroxylated and diacetylated cyclo-L-Trp-L-Leu derivative. The first step of the protubonine B synthesis is performed by the nonribosomal peptide synthetase pboA that catalyzes the formation of cyclo-L-Trp-L-Leu by condensing L-Leu with L-Trp. The flavin-dependent monooxygenase pboD is responsible for hydroxylation at C-3 of the indole ring and subsequent formation of the pyrrolidine ring, leadind to protubonine D. Protubonine D is further diacetylated by two acetyltransferases, pboB and pboC, to form the final product protubonine B via protubonine C. This chain is Nonribosomal peptide synthetase pboA, found in Aspergillus ustus.